Here is a 117-residue protein sequence, read N- to C-terminus: DNA-directed RNA polymerase subunit omega (117 aa).

The protein belongs to the RNA polymerase subunit omega family. The RNAP catalytic core consists of 2 alpha, 1 beta, 1 beta' and 1 omega subunit. When a sigma factor is associated with the core the holoenzyme is formed, which can initiate transcription.

The catalysed reaction is RNA(n) + a ribonucleoside 5'-triphosphate = RNA(n+1) + diphosphate. Promotes RNA polymerase assembly. Latches the N- and C-terminal regions of the beta' subunit thereby facilitating its interaction with the beta and alpha subunits. This chain is DNA-directed RNA polymerase subunit omega, found in Roseobacter denitrificans (strain ATCC 33942 / OCh 114) (Erythrobacter sp. (strain OCh 114)).